Consider the following 145-residue polypeptide: Holo-[acyl-carrier-protein] synthase (145 aa).

Mg(2+) contacts are provided by Asp-9 and Glu-59.

The protein belongs to the P-Pant transferase superfamily. AcpS family. Mg(2+) serves as cofactor.

The protein localises to the cytoplasm. It catalyses the reaction apo-[ACP] + CoA = holo-[ACP] + adenosine 3',5'-bisphosphate + H(+). Functionally, transfers the 4'-phosphopantetheine moiety from coenzyme A to a Ser of acyl-carrier-protein. This chain is Holo-[acyl-carrier-protein] synthase, found in Nocardia farcinica (strain IFM 10152).